The chain runs to 451 residues: Chromosomal replication initiator protein DnaA (451 aa).

The segment at 1-72 (MQSIEDIWQE…ANILQEITGR (72 aa)) is domain I, interacts with DnaA modulators. The domain II stretch occupies residues 72–108 (RLFDVRFIDGEQEENFEYTVIKPNPALDEDGIEIGKH). The tract at residues 109–325 (MLNPRYVFDT…GALIRVVAYS (217 aa)) is domain III, AAA+ region. ATP is bound by residues Gly153, Gly155, Lys156, and Thr157. The tract at residues 326–451 (SLVNKDITAG…KNLRKAQNMF (126 aa)) is domain IV, binds dsDNA.

The protein belongs to the DnaA family. As to quaternary structure, oligomerizes as a right-handed, spiral filament on DNA at oriC.

It localises to the cytoplasm. Plays an essential role in the initiation and regulation of chromosomal replication. ATP-DnaA binds to the origin of replication (oriC) to initiate formation of the DNA replication initiation complex once per cell cycle. Binds the DnaA box (a 9 base pair repeat at the origin) and separates the double-stranded (ds)DNA. Forms a right-handed helical filament on oriC DNA; dsDNA binds to the exterior of the filament while single-stranded (ss)DNA is stabiized in the filament's interior. The ATP-DnaA-oriC complex binds and stabilizes one strand of the AT-rich DNA unwinding element (DUE), permitting loading of DNA polymerase. After initiation quickly degrades to an ADP-DnaA complex that is not apt for DNA replication. Binds acidic phospholipids. In Listeria monocytogenes serotype 4b (strain F2365), this protein is Chromosomal replication initiator protein DnaA.